Consider the following 167-residue polypeptide: Lipoprotein signal peptidase (167 aa).

A run of 3 helical transmembrane segments spans residues Trp12–Lys32, Trp68–Leu88, and Gly99–Leu119. Catalysis depends on residues Asp124 and Asp142. The helical transmembrane segment at Ala137 to Phe157 threads the bilayer.

Belongs to the peptidase A8 family.

Its subcellular location is the cell inner membrane. It catalyses the reaction Release of signal peptides from bacterial membrane prolipoproteins. Hydrolyzes -Xaa-Yaa-Zaa-|-(S,diacylglyceryl)Cys-, in which Xaa is hydrophobic (preferably Leu), and Yaa (Ala or Ser) and Zaa (Gly or Ala) have small, neutral side chains.. The protein operates within protein modification; lipoprotein biosynthesis (signal peptide cleavage). In terms of biological role, this protein specifically catalyzes the removal of signal peptides from prolipoproteins. In Aeromonas hydrophila subsp. hydrophila (strain ATCC 7966 / DSM 30187 / BCRC 13018 / CCUG 14551 / JCM 1027 / KCTC 2358 / NCIMB 9240 / NCTC 8049), this protein is Lipoprotein signal peptidase.